The sequence spans 801 residues: tRNA(Met) cytidine acetyltransferase TmcA (801 aa).

Residues Gln-228, 256–265 (GRGKSSAVGL), and Arg-412 each bind ATP. The region spanning 457-637 (EELFLKNEEE…YTVIVVKPLS (181 aa)) is the N-acetyltransferase domain. Residues 562–564 (IAT), 569–575 (MGKGLGS), and Glu-602 each bind acetyl-CoA.

This sequence belongs to the RNA cytidine acetyltransferase family. TmcA subfamily.

The protein resides in the cytoplasm. The enzyme catalyses cytidine(34) in elongator tRNA(Met) + acetyl-CoA + ATP + H2O = N(4)-acetylcytidine(34) in elongator tRNA(Met) + ADP + phosphate + CoA + H(+). In terms of biological role, catalyzes the formation of N(4)-acetylcytidine (ac(4)C) at the wobble position of tRNA(Met), by using acetyl-CoA as an acetyl donor and ATP (or GTP). The sequence is that of tRNA(Met) cytidine acetyltransferase TmcA from Thermofilum pendens (strain DSM 2475 / Hrk 5).